Here is a 555-residue protein sequence, read N- to C-terminus: Glutamine--tRNA ligase (555 aa).

The short motif at 34–44 (PEPNGYLHIGH) is the 'HIGH' region element. ATP is bound by residues 35–37 (EPN) and 41–47 (HIGHAKS). L-glutamine-binding residues include Asp-67 and Tyr-212. ATP is bound by residues Thr-231, 261–262 (RL), and 269–271 (MSK). The short motif at 268–272 (VMSKR) is the 'KMSKS' region element. The segment at 317-324 (TKQDNTIE) is interaction with tRNA.

This sequence belongs to the class-I aminoacyl-tRNA synthetase family. Monomer.

The protein localises to the cytoplasm. The enzyme catalyses tRNA(Gln) + L-glutamine + ATP = L-glutaminyl-tRNA(Gln) + AMP + diphosphate. The protein is Glutamine--tRNA ligase of Salmonella schwarzengrund (strain CVM19633).